The chain runs to 206 residues: ATP-dependent Clp protease proteolytic subunit (206 aa).

Catalysis depends on Ser-108, which acts as the Nucleophile. Residue His-133 is part of the active site.

It belongs to the peptidase S14 family. As to quaternary structure, fourteen ClpP subunits assemble into 2 heptameric rings which stack back to back to give a disk-like structure with a central cavity, resembling the structure of eukaryotic proteasomes.

It localises to the cytoplasm. The catalysed reaction is Hydrolysis of proteins to small peptides in the presence of ATP and magnesium. alpha-casein is the usual test substrate. In the absence of ATP, only oligopeptides shorter than five residues are hydrolyzed (such as succinyl-Leu-Tyr-|-NHMec, and Leu-Tyr-Leu-|-Tyr-Trp, in which cleavage of the -Tyr-|-Leu- and -Tyr-|-Trp bonds also occurs).. Its function is as follows. Cleaves peptides in various proteins in a process that requires ATP hydrolysis. Has a chymotrypsin-like activity. Plays a major role in the degradation of misfolded proteins. The chain is ATP-dependent Clp protease proteolytic subunit from Chromohalobacter salexigens (strain ATCC BAA-138 / DSM 3043 / CIP 106854 / NCIMB 13768 / 1H11).